Consider the following 410-residue polypeptide: Cysteine desulfurase IscS (410 aa).

Pyridoxal 5'-phosphate contacts are provided by residues 80 to 81, Asn160, Gln188, and 208 to 210; these read AT and SGH. At Lys211 the chain carries N6-(pyridoxal phosphate)lysine. Position 248 (Thr248) interacts with pyridoxal 5'-phosphate. The Cysteine persulfide intermediate role is filled by Cys334. Cys334 provides a ligand contact to [2Fe-2S] cluster.

This sequence belongs to the class-V pyridoxal-phosphate-dependent aminotransferase family. NifS/IscS subfamily. As to quaternary structure, homodimer. Forms a heterotetramer with IscU, interacts with other sulfur acceptors. Requires pyridoxal 5'-phosphate as cofactor.

The protein localises to the cytoplasm. The catalysed reaction is (sulfur carrier)-H + L-cysteine = (sulfur carrier)-SH + L-alanine. It participates in cofactor biosynthesis; iron-sulfur cluster biosynthesis. In terms of biological role, master enzyme that delivers sulfur to a number of partners involved in Fe-S cluster assembly, tRNA modification or cofactor biosynthesis. Catalyzes the removal of elemental sulfur atoms from cysteine to produce alanine. Functions as a sulfur delivery protein for Fe-S cluster synthesis onto IscU, an Fe-S scaffold assembly protein, as well as other S acceptor proteins. The sequence is that of Cysteine desulfurase IscS from Rickettsia massiliae (strain Mtu5).